Reading from the N-terminus, the 466-residue chain is Ribulose bisphosphate carboxylase large chain (466 aa).

K5 carries the N6,N6,N6-trimethyllysine modification. The substrate site is built by N114 and T164. The active-site Proton acceptor is K166. K168 lines the substrate pocket. Mg(2+)-binding residues include K192, D194, and E195. K192 carries the N6-carboxylysine modification. H285 serves as the catalytic Proton acceptor. Substrate is bound by residues R286, H318, and S370.

It belongs to the RuBisCO large chain family. Type I subfamily. Heterohexadecamer of 8 large chains and 8 small chains; disulfide-linked. The disulfide link is formed within the large subunit homodimers. It depends on Mg(2+) as a cofactor. Post-translationally, the disulfide bond which can form in the large chain dimeric partners within the hexadecamer appears to be associated with oxidative stress and protein turnover.

The protein localises to the plastid. The protein resides in the chloroplast. It carries out the reaction 2 (2R)-3-phosphoglycerate + 2 H(+) = D-ribulose 1,5-bisphosphate + CO2 + H2O. It catalyses the reaction D-ribulose 1,5-bisphosphate + O2 = 2-phosphoglycolate + (2R)-3-phosphoglycerate + 2 H(+). RuBisCO catalyzes two reactions: the carboxylation of D-ribulose 1,5-bisphosphate, the primary event in carbon dioxide fixation, as well as the oxidative fragmentation of the pentose substrate in the photorespiration process. Both reactions occur simultaneously and in competition at the same active site. The chain is Ribulose bisphosphate carboxylase large chain from Aesculus pavia (Red buckeye).